We begin with the raw amino-acid sequence, 342 residues long: Peptide chain release factor 1 (342 aa).

N5-methylglutamine is present on glutamine 211. A disordered region spans residues 262–282 (KEREISQKRKSQIGTGERSEK).

Belongs to the prokaryotic/mitochondrial release factor family. Post-translationally, methylated by PrmC. Methylation increases the termination efficiency of RF1.

The protein resides in the cytoplasm. Its function is as follows. Peptide chain release factor 1 directs the termination of translation in response to the peptide chain termination codons UAG and UAA. The sequence is that of Peptide chain release factor 1 (prfA) from Thermotoga maritima (strain ATCC 43589 / DSM 3109 / JCM 10099 / NBRC 100826 / MSB8).